The chain runs to 124 residues: Astakine (124 aa).

The signal sequence occupies residues 1–21 (MAVSSAVRMLSVACLVVSAAG). Cystine bridges form between C28/C40, C34/C52, C39/C91, C62/C99, and C93/C106.

Belongs to the AVIT (prokineticin) family.

It is found in the secreted. Cytokine directly involved in hematopoiesis. The sequence is that of Astakine from Penaeus monodon (Giant tiger prawn).